A 295-amino-acid polypeptide reads, in one-letter code: Phosphate transport system permease protein PstA (295 aa).

6 helical membrane-spanning segments follow: residues 29–49 (IALV…IWIL), 88–108 (LLIL…GIYL), 126–146 (DILL…IVVA), 149–169 (EHFS…PIVI), 198–218 (ISAI…LLAI), and 266–286 (NLAW…NILA). In terms of domain architecture, ABC transmembrane type-1 spans 83 to 286 (IAGSGLLILW…LCVLLLNILA (204 aa)).

It belongs to the binding-protein-dependent transport system permease family. CysTW subfamily.

The protein localises to the cell inner membrane. Its function is as follows. Part of a binding-protein-dependent transport system for phosphate; probably responsible for the translocation of the substrate across the membrane. The polypeptide is Phosphate transport system permease protein PstA (pstA) (Yersinia pestis).